The primary structure comprises 455 residues: Venom prothrombin activator trocarin-D (455 aa).

A signal peptide spans 1-20; it reads MAPQLLLCLILTFLWSLPEA. Residues 21-40 constitute a propeptide that is removed on maturation; that stretch reads ESNVFLKSKVANRFLQRTKR. The Gla domain occupies 41-86; sequence SNSLFEEIRPGNIERECIEEKCSKEEAREVFEDNEKTETFWNVYVD. Glu46, Glu47, Glu54, Glu56, Glu59, Glu60, Glu65, Glu66, Glu69, Glu72, and Glu75 each carry 4-carboxyglutamate. A disulfide bridge links Cys57 with Cys62. The region spanning 86-122 is the EGF-like 1; calcium-binding domain; it reads DGDQCSSNPCHYRGTCKDGIGSYTCTCLPNYEGKNCE. Disulfide bonds link Cys90/Cys101, Cys95/Cys110, Cys112/Cys121, Cys129/Cys140, Cys136/Cys149, Cys151/Cys164, Cys172/Cys328, Cys216/Cys221, Cys236/Cys252, Cys376/Cys390, and Cys401/Cys429. An O-linked (Hex...) serine glycan is attached at Ser92. Residues 129–164 enclose the EGF-like 2 domain; the sequence is CRVDNGNCWHFCKRVQSETQCSCAESYRLGVDGHSC. The propeptide at 182–209 is activation peptide; the sequence is REASLPDFVQSQKATLLKKSDNPSPDIR. A Peptidase S1 domain is found at 210–453; sequence IVNGMDCKLG…FIPWIKKIMS (244 aa). His251 acts as the Charge relay system in catalysis. Asn254 carries an N-linked (GlcNAc...) asparagine glycan. The Charge relay system role is filled by Asp308. The active-site Charge relay system is the Ser405.

Belongs to the peptidase S1 family. Snake venom subfamily. In terms of assembly, heterodimer of a light chain and a heavy chain; disulfide-linked. Post-translationally, gamma-carboxyglutamate residues are formed by vitamin K dependent carboxylation. These residues are essential for the binding of calcium. The O-linked saccharides at Ser-92 are a mixture of Xyl-Glc, and Glc along with smaller amounts of Xyl-GlcNAc, GlcNAc, Gal, GalNAc, Xyl-Gal, and Xyl-GalNAc, suggesting that the glycosyl transferases responsible for this modification are non-specific. The N-linked carbohydrate at Asn-254 (Asn-45 of the heavy chain) is a sialylated and diantennary oligosaccharide. Expressed by the venom gland.

The protein localises to the secreted. It catalyses the reaction Selective cleavage of Arg-|-Thr and then Arg-|-Ile bonds in prothrombin to form thrombin.. With respect to regulation, activated by calcium and phospholipids. Snake prothrombin activator that attacks the hemostatic system of prey. This protein is functionally similar to blood coagulation factor Xa. Induces cyanosis and death in mice at 1 mg/kg body weight during blood clotting. The protein is Venom prothrombin activator trocarin-D of Tropidechis carinatus (Australian rough-scaled snake).